Consider the following 208-residue polypeptide: Holliday junction branch migration complex subunit RuvA (208 aa).

The interval 1–63 (MIGMLTGRVE…QDSVTLYGFL (63 aa)) is domain I. The domain II stretch occupies residues 64 to 142 (DRDSKRVFLQ…LNQSDDASAG (79 aa)). The tract at residues 143–151 (NAPYQPTVD) is flexible linker. Positions 151–208 (DAGVEQVVEGLVSLGWRQQDAQRAVNEACAENDVPMPLASDDAPRVLRLALARMDRGR) are domain III.

It belongs to the RuvA family. In terms of assembly, homotetramer. Forms an RuvA(8)-RuvB(12)-Holliday junction (HJ) complex. HJ DNA is sandwiched between 2 RuvA tetramers; dsDNA enters through RuvA and exits via RuvB. An RuvB hexamer assembles on each DNA strand where it exits the tetramer. Each RuvB hexamer is contacted by two RuvA subunits (via domain III) on 2 adjacent RuvB subunits; this complex drives branch migration. In the full resolvosome a probable DNA-RuvA(4)-RuvB(12)-RuvC(2) complex forms which resolves the HJ.

Its subcellular location is the cytoplasm. In terms of biological role, the RuvA-RuvB-RuvC complex processes Holliday junction (HJ) DNA during genetic recombination and DNA repair, while the RuvA-RuvB complex plays an important role in the rescue of blocked DNA replication forks via replication fork reversal (RFR). RuvA specifically binds to HJ cruciform DNA, conferring on it an open structure. The RuvB hexamer acts as an ATP-dependent pump, pulling dsDNA into and through the RuvAB complex. HJ branch migration allows RuvC to scan DNA until it finds its consensus sequence, where it cleaves and resolves the cruciform DNA. This is Holliday junction branch migration complex subunit RuvA from Bifidobacterium longum subsp. infantis (strain ATCC 15697 / DSM 20088 / JCM 1222 / NCTC 11817 / S12).